A 144-amino-acid chain; its full sequence is Large ribosomal subunit protein uL11m (144 aa).

The transit peptide at 1–32 (MASTRTTIIKLIVPAGKATPTPPIGPALGARG) directs the protein to the mitochondrion.

This sequence belongs to the universal ribosomal protein uL11 family. Component of the mitochondrial large ribosomal subunit (mt-LSU). Mature yeast 74S mitochondrial ribosomes consist of a small (37S) and a large (54S) subunit. The 37S small subunit contains a 15S ribosomal RNA (15S mt-rRNA) and at least 32 different proteins. The 54S large subunit contains a 21S rRNA (21S mt-rRNA) and at least 45 different proteins.

The protein localises to the mitochondrion. It localises to the cytoplasm. Component of the mitochondrial ribosome (mitoribosome), a dedicated translation machinery responsible for the synthesis of mitochondrial genome-encoded proteins, including at least some of the essential transmembrane subunits of the mitochondrial respiratory chain. The mitoribosomes are attached to the mitochondrial inner membrane and translation products are cotranslationally integrated into the membrane. In Schizosaccharomyces pombe (strain 972 / ATCC 24843) (Fission yeast), this protein is Large ribosomal subunit protein uL11m.